The following is a 241-amino-acid chain: Phosphoadenosine 5'-phosphosulfate reductase (241 aa).

C235 acts as the Nucleophile; cysteine thiosulfonate intermediate in catalysis.

The protein belongs to the PAPS reductase family. CysH subfamily.

It is found in the cytoplasm. It carries out the reaction [thioredoxin]-disulfide + sulfite + adenosine 3',5'-bisphosphate + 2 H(+) = [thioredoxin]-dithiol + 3'-phosphoadenylyl sulfate. The protein operates within sulfur metabolism; hydrogen sulfide biosynthesis; sulfite from sulfate: step 3/3. Functionally, catalyzes the formation of sulfite from phosphoadenosine 5'-phosphosulfate (PAPS) using thioredoxin as an electron donor. The chain is Phosphoadenosine 5'-phosphosulfate reductase from Xanthomonas campestris pv. campestris (strain 8004).